Reading from the N-terminus, the 99-residue chain is NADH-quinone oxidoreductase subunit K (99 aa).

The next 3 helical transmembrane spans lie at 3-23, 28-48, and 59-79; these read PINYLYLSALLFTIGAAGVLL, IVMFMCVELMLNAVNLAFVTF, and MIAFFTMVVAACEVVIGLAII.

It belongs to the complex I subunit 4L family. As to quaternary structure, NDH-1 is composed of 14 different subunits. Subunits NuoA, H, J, K, L, M, N constitute the membrane sector of the complex.

The protein resides in the cell membrane. It catalyses the reaction a quinone + NADH + 5 H(+)(in) = a quinol + NAD(+) + 4 H(+)(out). In terms of biological role, NDH-1 shuttles electrons from NADH, via FMN and iron-sulfur (Fe-S) centers, to quinones in the respiratory chain. The immediate electron acceptor for the enzyme in this species is believed to be a menaquinone. Couples the redox reaction to proton translocation (for every two electrons transferred, four hydrogen ions are translocated across the cytoplasmic membrane), and thus conserves the redox energy in a proton gradient. This chain is NADH-quinone oxidoreductase subunit K, found in Mycobacterium avium (strain 104).